Here is a 497-residue protein sequence, read N- to C-terminus: NAD(P)H-quinone oxidoreductase chain 4, chloroplastic (497 aa).

Helical transmembrane passes span 4 to 24, 35 to 55, 84 to 104, 111 to 131, 134 to 154, 167 to 187, 208 to 228, 242 to 262, 274 to 294, 305 to 325, 330 to 350, 386 to 406, 411 to 431, and 463 to 483; these read FPWLTLVVILPIAGGSLIFLF, YTVCICLIDLLLTTYAFCYHF, GLSIGPILLTGFITTLATLAA, CKLFYFLMLAMYSGQIGPFSS, ILLFFIMWELELIPVYLLLAM, FILYTAGSSVFLLMATLGIGL, ALEIIVYIGFLIAFAVKSPII, HYSTCMLLAGILLKMGAYGLV, SIFCPWLMILGSIQIIYAASA, IAYSSVSHMGFLIIGIGSISD, GAILQIISHGFIGAALFFLSG, LALPGMSGFFAELIVFWGIIT, FLIMKILITFVTAIGMILTPI, and FISISILIPIIGIGIYPDFIF.

It belongs to the complex I subunit 4 family.

Its subcellular location is the plastid. It is found in the chloroplast thylakoid membrane. The catalysed reaction is a plastoquinone + NADH + (n+1) H(+)(in) = a plastoquinol + NAD(+) + n H(+)(out). The enzyme catalyses a plastoquinone + NADPH + (n+1) H(+)(in) = a plastoquinol + NADP(+) + n H(+)(out). This is NAD(P)H-quinone oxidoreductase chain 4, chloroplastic (ndhD) from Lotus japonicus (Lotus corniculatus var. japonicus).